The following is a 405-amino-acid chain: Tyrosine--tRNA ligase (405 aa).

L-tyrosine is bound at residue Tyr-35. The 'HIGH' region signature appears at 40–49 (TTSSSLHIGH). Residues Tyr-166 and Gln-170 each contribute to the L-tyrosine site. Residues 226–230 (KMGKS) carry the 'KMSKS' region motif. ATP is bound at residue Lys-229. Positions 340 to 404 (ILLIDLMLDS…VGKKKFLRIV (65 aa)) constitute an S4 RNA-binding domain.

It belongs to the class-I aminoacyl-tRNA synthetase family. TyrS type 1 subfamily. Homodimer.

The protein resides in the cytoplasm. The catalysed reaction is tRNA(Tyr) + L-tyrosine + ATP = L-tyrosyl-tRNA(Tyr) + AMP + diphosphate + H(+). Functionally, catalyzes the attachment of tyrosine to tRNA(Tyr) in a two-step reaction: tyrosine is first activated by ATP to form Tyr-AMP and then transferred to the acceptor end of tRNA(Tyr). This is Tyrosine--tRNA ligase from Borrelia garinii subsp. bavariensis (strain ATCC BAA-2496 / DSM 23469 / PBi) (Borreliella bavariensis).